Here is a 405-residue protein sequence, read N- to C-terminus: uncharacterized protein (405 aa).

12 helical membrane-spanning segments follow: residues 3–23 (IIAK…PTTE), 42–62 (GITQ…ILTL), 73–93 (PIAL…IFAV), 95–115 (IEML…GSVI), 135–155 (SLSP…GYII), 162–182 (YVFV…YKVL), 209–229 (ILWL…GFFI), 248–268 (KLAF…GYLI), 280–300 (GLGF…AFIL), 309–329 (LAIA…NLLI), 346–366 (TAGS…TYLV), and 377–397 (FALL…CIWV).

It belongs to the major facilitator superfamily. Bcr/CmlA family.

The protein resides in the cell inner membrane. This is an uncharacterized protein from Rickettsia felis (strain ATCC VR-1525 / URRWXCal2) (Rickettsia azadi).